The following is a 392-amino-acid chain: Phosphoglycerate kinase (392 aa).

Substrate is bound by residues 21-23 (DLN), Arg-36, 59-62 (HLGR), Arg-113, and Arg-146. Residues Lys-197, Glu-319, and 345–348 (GGDT) each bind ATP.

It belongs to the phosphoglycerate kinase family. As to quaternary structure, monomer.

The protein resides in the cytoplasm. The enzyme catalyses (2R)-3-phosphoglycerate + ATP = (2R)-3-phospho-glyceroyl phosphate + ADP. Its pathway is carbohydrate degradation; glycolysis; pyruvate from D-glyceraldehyde 3-phosphate: step 2/5. The polypeptide is Phosphoglycerate kinase (Nitrosococcus oceani (strain ATCC 19707 / BCRC 17464 / JCM 30415 / NCIMB 11848 / C-107)).